A 237-amino-acid chain; its full sequence is Nodulation protein NolA (237 aa).

One can recognise an HTH merR-type domain in the interval 10–79 (RWRIGELAEA…LVEIRKAMEG (70 aa)). The H-T-H motif DNA-binding region spans 13 to 32 (IGELAEATGVTVRTLHHYEH).

Functionally, involved in genotype-specific nodulation of soybeans. This chain is Nodulation protein NolA (nolA), found in Bradyrhizobium diazoefficiens (strain JCM 10833 / BCRC 13528 / IAM 13628 / NBRC 14792 / USDA 110).